The primary structure comprises 1532 residues: Multidrug resistance-associated protein 1 (1532 aa).

At 1–33 (MALSSFCSSDGSDPLWDWNVTWHTSNPDFTKCF) the chain is on the extracellular side. N-linked (GlcNAc...) asparagine glycosylation occurs at Asn19. A helical transmembrane segment spans residues 34-54 (QNTVLTWVPCFYLWSCFPLYF). The Cytoplasmic segment spans residues 55–74 (LYLSRHDRGYIQMTHLNKAK). The helical transmembrane segment at 75–95 (TALGFFLWIICWADLFYSFWE) threads the bilayer. At 96–100 (RSQGM) the chain is on the extracellular side. A helical membrane pass occupies residues 101 to 121 (LLAPVLLVSPTLLGITMLLAT). Over 122 to 133 (FLIQFERRKGVQ) the chain is Cytoplasmic. The chain crosses the membrane as a helical span at residues 134 to 154 (SSGIMLTFWLVALLCALAILR). Topologically, residues 155 to 172 (SKIISALKKDAQVDMFRD) are extracellular. The chain crosses the membrane as a helical span at residues 173–193 (SAFYLYFTLVFIQLVLSCFSD). The Cytoplasmic segment spans residues 194 to 317 (SSPLFSETVR…KDRDPSLFKV (124 aa)). The residue at position 277 (Tyr277) is a Phosphotyrosine. Phosphoserine is present on Ser290. A helical transmembrane segment spans residues 318-338 (LYKTFGPYFLMSFLYKALHDL). Positions 326–609 (FLMSFLYKAL…LPMVISSIVQ (284 aa)) constitute an ABC transmembrane type-1 1 domain. The Extracellular segment spans residues 339–364 (MMFAGPEILELIINFVNDREAPDWQG). A helical transmembrane segment spans residues 365 to 385 (YLYTALLFVSACLQTLALHQY). Residues 386–441 (FHICFVTGMRIKTAVVGAVYRKALVITNSARKSSTVGEIVNLMSVDAQRFMDLATY) are Cytoplasmic-facing. A helical membrane pass occupies residues 442–462 (INMIWSAPLQVTLALYFLWLN). The Extracellular segment spans residues 463 to 465 (LGP). The chain crosses the membrane as a helical span at residues 466–486 (SVLAGVAVMILMVPFNAVMAM). Over 487 to 548 (KTKTYQVAHM…VLKKSAYLAA (62 aa)) the chain is Cytoplasmic. Lys504 bears the N6-succinyllysine mark. Residues 549–569 (VGTFTWVCTPFLVALSTFAVF) traverse the membrane as a helical segment. The Extracellular portion of the chain corresponds to 570-591 (VTVDEKNILDAKKAFVSLALFN). A helical membrane pass occupies residues 592-612 (ILRFPLNILPMVISSIVQASV). At 613-967 (SLKRLRIFLS…VKLSVYWNYM (355 aa)) the chain is on the cytoplasmic side. Residues 645–869 (ITVKNATFTW…DGAFAEFVRT (225 aa)) enclose the ABC transporter 1 domain. Position 679-686 (679-686 (GQVGCGKS)) interacts with ATP. Residues Ser879, Ser883, Ser916, and Ser931 each carry the phosphoserine modification. A helical membrane pass occupies residues 968–988 (KAIGLCISFLSIFLFLCNHVS). The ABC transmembrane type-1 2 domain occupies 975-1257 (SFLSIFLFLC…LVRMSSEMET (283 aa)). Residues 989–1026 (ALASNYWLSLWTDDRPAVNGTQENRNFRLSVYGALGIL) are Extracellular-facing. A helical transmembrane segment spans residues 1027–1047 (QGVAVFGYSMAVSIGGIFASR). Over 1048 to 1090 (RLHLDLLQNVLRSPMSFFERTPSGNLVNRFSKELDTVDSMIPQ) the chain is Cytoplasmic. Residues 1091 to 1111 (VIKMFMGSLFSVIGAVIIILL) traverse the membrane as a helical segment. Ala1112 is a topological domain (extracellular). The helical transmembrane segment at 1113–1133 (TPIAAVIIPPLGLVYFFVQRF) threads the bilayer. Topologically, residues 1134–1204 (YVASSRQLKR…VANRWLAVRL (71 aa)) are cytoplasmic. The helical transmembrane segment at 1205 to 1225 (ECVGNCIVLFAALFAVISRHS) threads the bilayer. The Extracellular segment spans residues 1226-1227 (LS). The chain crosses the membrane as a helical span at residues 1228-1248 (AGLVGLSVSYSLQITAYLNWL). The Cytoplasmic segment spans residues 1249 to 1532 (VRMSSEMETN…YSMAKDAGLV (284 aa)). Residues 1294–1528 (VEFRDYCLRY…RGVFYSMAKD (235 aa)) form the ABC transporter 2 domain. Residue 1328–1335 (GRTGAGKS) coordinates ATP.

The protein belongs to the ABC transporter superfamily. ABCC family. Conjugate transporter (TC 3.A.1.208) subfamily. In terms of processing, glycosylated. As to expression, skeletal muscle, brain, heart, spleen, lung and kidney.

The protein localises to the cell membrane. Its subcellular location is the basolateral cell membrane. It catalyses the reaction ATP + H2O + xenobioticSide 1 = ADP + phosphate + xenobioticSide 2.. The enzyme catalyses an S-substituted glutathione(in) + ATP + H2O = an S-substituted glutathione(out) + ADP + phosphate + H(+). The catalysed reaction is sphing-4-enine 1-phosphate(in) + ATP + H2O = sphing-4-enine 1-phosphate(out) + ADP + phosphate + H(+). It carries out the reaction leukotriene C4(in) + ATP + H2O = leukotriene C4(out) + ADP + phosphate + H(+). It catalyses the reaction 17beta-estradiol 17-O-(beta-D-glucuronate)(in) + ATP + H2O = 17beta-estradiol 17-O-(beta-D-glucuronate)(out) + ADP + phosphate + H(+). The enzyme catalyses daunorubicin(in) + ATP + H2O = daunorubicin(out) + ADP + phosphate + H(+). The catalysed reaction is vincristine(in) + ATP + H2O = vincristine(out) + ADP + phosphate + H(+). It carries out the reaction 2',3'-cGAMP(in) + ATP + H2O = 2',3'-cGAMP(out) + ADP + phosphate + H(+). It catalyses the reaction S-[(2E,6E,10E)-geranylgeranyl]-L-glutathione(in) + ATP + H2O = S-[(2E,6E,10E)-geranylgeranyl]-L-glutathione(out) + ADP + phosphate + H(+). The enzyme catalyses prostaglandin A2-S-(R)-glutathione(in) + ATP + H2O = prostaglandin A2-S-(R)-glutathione(out) + ADP + phosphate + H(+). The catalysed reaction is prostaglandin A2-S-(S)-glutathione(in) + ATP + H2O = prostaglandin A2-S-(S)-glutathione(out) + ADP + phosphate + H(+). MK 571 inhibits sphingosine 1-phosphate and leukotriene C4 export. Its function is as follows. Mediates export of organic anions and drugs from the cytoplasm. Mediates ATP-dependent transport of glutathione and glutathione conjugates, leukotriene C4, estradiol-17-beta-o-glucuronide, methotrexate, antiviral drugs and other xenobiotics. Confers resistance to anticancer drugs by decreasing accumulation of drug in cells, and by mediating ATP- and GSH-dependent drug export. Hydrolyzes ATP with low efficiency. Catalyzes the export of sphingosine 1-phosphate from mast cells independently of their degranulation. Participates in inflammatory response by allowing export of leukotriene C4 from leukotriene C4-synthesizing cells. Exports S-geranylgeranyl-glutathione (GGG) in lymphoid cells and stromal compartments of lymphoid organs. ABCC1 (via extracellular transport) with GGT5 (via GGG catabolism) establish GGG gradients within lymphoid tissues to position P2RY8-positive lymphocytes at germinal centers in lymphoid follicles and restrict their chemotactic transmigration from blood vessels to the bone marrow parenchyma. Mediates basolateral export of GSH-conjugated R- and S-prostaglandin A2 diastereomers in polarized epithelial cells. This Rattus norvegicus (Rat) protein is Multidrug resistance-associated protein 1.